The chain runs to 279 residues: Thiazole synthase (279 aa).

The active-site Schiff-base intermediate with DXP is the K116. 1-deoxy-D-xylulose 5-phosphate is bound by residues G177, A203–G204, and N225–S226.

This sequence belongs to the ThiG family. As to quaternary structure, homotetramer. Forms heterodimers with either ThiH or ThiS.

It is found in the cytoplasm. It carries out the reaction [ThiS sulfur-carrier protein]-C-terminal-Gly-aminoethanethioate + 2-iminoacetate + 1-deoxy-D-xylulose 5-phosphate = [ThiS sulfur-carrier protein]-C-terminal Gly-Gly + 2-[(2R,5Z)-2-carboxy-4-methylthiazol-5(2H)-ylidene]ethyl phosphate + 2 H2O + H(+). Its pathway is cofactor biosynthesis; thiamine diphosphate biosynthesis. Its function is as follows. Catalyzes the rearrangement of 1-deoxy-D-xylulose 5-phosphate (DXP) to produce the thiazole phosphate moiety of thiamine. Sulfur is provided by the thiocarboxylate moiety of the carrier protein ThiS. In vitro, sulfur can be provided by H(2)S. The protein is Thiazole synthase of Trichodesmium erythraeum (strain IMS101).